Here is a 528-residue protein sequence, read N- to C-terminus: Glucosidase 2 subunit beta (528 aa).

An N-terminal signal peptide occupies residues methionine 1–alanine 14. Position 24 is a phosphoserine; by FAM20C (serine 24). LDL-receptor class A domains lie at phenylalanine 37–proline 71 and asparagine 72–glutamate 113. 2 disulfide bridges follow: cysteine 39/cysteine 58 and cysteine 56/cysteine 70. Aspartate 49 contributes to the substrate binding site. Ca(2+) is bound by residues glutamine 50, aspartate 53, tyrosine 55, aspartate 57, aspartate 63, and glutamate 64. Position 53 (aspartate 53) interacts with substrate. Asparagine 72 carries N-linked (GlcNAc...) asparagine glycosylation. Intrachain disulfides connect cysteine 77/cysteine 99, cysteine 97/cysteine 112, and cysteine 100/cysteine 116. Serine 89 carries the post-translational modification Phosphoserine; by PKC. Arginine 91, aspartate 94, valine 96, aspartate 98, aspartate 104, and glutamate 105 together coordinate Ca(2+). Residue lysine 166 is modified to N6-succinyllysine. Serine 168 bears the Phosphoserine; by FAM20C mark. EF-hand domains lie at glutamine 209–glycine 244 and aspartate 245–proline 290. Ca(2+) is bound by residues aspartate 222, aspartate 224, aspartate 226, threonine 228, and glutamate 233. Disordered regions lie at residues leucine 234–threonine 266 and arginine 281–proline 357. The span at alanine 247–serine 258 shows a compositional bias: low complexity. The span at threonine 312–glutamate 337 shows a compositional bias: acidic residues. The segment covering alanine 338–alanine 348 has biased composition (pro residues). A phosphoserine; by PKC mark is found at serine 383 and serine 390. The MRH domain occupies serine 413–glutamate 514. A disulfide bridge links cysteine 415 with cysteine 428. Residue serine 434 is modified to Phosphoserine; by PKC. Disulfide bonds link cysteine 471–cysteine 500 and cysteine 485–cysteine 512. N-linked (GlcNAc...) asparagine glycosylation is present at asparagine 476. The short motif at histidine 525–leucine 528 is the Prevents secretion from ER element.

As to quaternary structure, heterodimer of a catalytic alpha subunit (GANAB) and a beta subunit (PRKCSH). Binds glycosylated PTPRC.

The protein localises to the endoplasmic reticulum. It functions in the pathway glycan metabolism; N-glycan metabolism. Its function is as follows. Regulatory subunit of glucosidase II that cleaves sequentially the 2 innermost alpha-1,3-linked glucose residues from the Glc(2)Man(9)GlcNAc(2) oligosaccharide precursor of immature glycoproteins. Required for efficient PKD1/Polycystin-1 biogenesis and trafficking to the plasma membrane of the primary cilia. This Homo sapiens (Human) protein is Glucosidase 2 subunit beta.